We begin with the raw amino-acid sequence, 365 residues long: Putative F-box/kelch-repeat protein At4g39290 (365 aa).

One can recognise an F-box domain in the interval 10–58 (QMTFSMLPDDLVLNCLARVSKVYYPSLSFVSKKFRSLIASTELQELRSF). Kelch repeat units follow at residues 118–165 (DIYA…CVLN) and 167–213 (KIYV…KIVG).

The chain is Putative F-box/kelch-repeat protein At4g39290 from Arabidopsis thaliana (Mouse-ear cress).